The primary structure comprises 546 residues: Chaperonin GroEL (546 aa).

ATP-binding positions include 30–33 (TLGP), Lys51, 87–91 (DGTTT), Gly415, 479–481 (NAA), and Asp495.

It belongs to the chaperonin (HSP60) family. Forms a cylinder of 14 subunits composed of two heptameric rings stacked back-to-back. Interacts with the co-chaperonin GroES.

The protein localises to the cytoplasm. It catalyses the reaction ATP + H2O + a folded polypeptide = ADP + phosphate + an unfolded polypeptide.. Together with its co-chaperonin GroES, plays an essential role in assisting protein folding. The GroEL-GroES system forms a nano-cage that allows encapsulation of the non-native substrate proteins and provides a physical environment optimized to promote and accelerate protein folding. The sequence is that of Chaperonin GroEL from Bordetella avium (strain 197N).